The chain runs to 159 residues: Cytochrome c-type biogenesis protein CcmE (159 aa).

Topologically, residues 1-7 are cytoplasmic; that stretch reads MTPRQRR. A helical; Signal-anchor for type II membrane protein transmembrane segment spans residues 8–28; it reads LGMLLAALACAGIALALVLNA. The Periplasmic portion of the chain corresponds to 29-159; it reads FRSNLVFFFS…LAEGERETQR (131 aa). 2 residues coordinate heme: His123 and Tyr127.

The protein belongs to the CcmE/CycJ family.

It localises to the cell inner membrane. Heme chaperone required for the biogenesis of c-type cytochromes. Transiently binds heme delivered by CcmC and transfers the heme to apo-cytochromes in a process facilitated by CcmF and CcmH. This chain is Cytochrome c-type biogenesis protein CcmE, found in Cupriavidus pinatubonensis (strain JMP 134 / LMG 1197) (Cupriavidus necator (strain JMP 134)).